The chain runs to 433 residues: Enolase (433 aa).

Glutamine 163 lines the (2R)-2-phosphoglycerate pocket. Glutamate 205 acts as the Proton donor in catalysis. 3 residues coordinate Mg(2+): aspartate 242, glutamate 285, and aspartate 312. Positions 337, 366, 367, and 388 each coordinate (2R)-2-phosphoglycerate. Residue lysine 337 is the Proton acceptor of the active site.

It belongs to the enolase family. Mg(2+) serves as cofactor.

It is found in the cytoplasm. The protein localises to the secreted. It localises to the cell surface. The catalysed reaction is (2R)-2-phosphoglycerate = phosphoenolpyruvate + H2O. The protein operates within carbohydrate degradation; glycolysis; pyruvate from D-glyceraldehyde 3-phosphate: step 4/5. In terms of biological role, catalyzes the reversible conversion of 2-phosphoglycerate (2-PG) into phosphoenolpyruvate (PEP). It is essential for the degradation of carbohydrates via glycolysis. This Lawsonia intracellularis (strain PHE/MN1-00) protein is Enolase.